The chain runs to 1281 residues: Zinc finger transcription factor Trps1 (1281 aa).

Disordered stretches follow at residues 1–101 and 116–204; these read MVRK…VSFP and PAAG…KGDL. Polar residues-rich tracts occupy residues 21-31 and 40-49; these read LEPTATESKVS and DQMSENTDQS. A Glycyl lysine isopeptide (Lys-Gly) (interchain with G-Cter in SUMO2) cross-link involves residue K29. S90 and S127 each carry phosphoserine. A compositionally biased stretch (basic and acidic residues) spans 148–162; the sequence is LETKEEHKMSPKATE. The span at 166-189 shows a compositional bias: polar residues; the sequence is PVQSGQANCQGLSPVSVASKNPQV. S178 and S216 each carry phosphoserine. The C2H2-type 1; atypical zinc finger occupies 222 to 247; sequence FKCNICGYGYYGNDPTDLIKHFRKYH. K263 participates in a covalent cross-link: Glycyl lysine isopeptide (Lys-Gly) (interchain with G-Cter in SUMO2). The segment at 333-358 adopts a C2H2-type 2; atypical zinc-finger fold; it reads FRCKFCNFTYMGNSSTELEQHFLQTH. The interval 365–393 is disordered; it reads SLPSSEGVKPSEKNSNKSIPALRASDSGD. Residues K418, K457, K474, and K488 each participate in a glycyl lysine isopeptide (Lys-Gly) (interchain with G-Cter in SUMO2) cross-link. The tract at residues 484–515 is disordered; it reads NDLAKSVEGEPLTKPEKGLSGAKKKDFPSKGA. The segment covering 488-515 has biased composition (basic and acidic residues); the sequence is KSVEGEPLTKPEKGLSGAKKKDFPSKGA. The C2H2-type 3; atypical zinc finger occupies 614–637; sequence HQCHQCSFSTPDVDVLLFHYETVH. Positions 635 to 819 are mediates interaction with GLI3; sequence TVHESQASDV…SLGLLTPVSS (185 aa). K645 is covalently cross-linked (Glycyl lysine isopeptide (Lys-Gly) (interchain with G-Cter in SUMO2)). C2H2-type zinc fingers lie at residues 666-689 and 692-715; these read HSCT…RRAH and YKCR…NTVH. Glycyl lysine isopeptide (Lys-Gly) (interchain with G-Cter in SUMO2) cross-links involve residues K737 and K755. A Glycyl lysine isopeptide (Lys-Gly) (interchain with G-Cter in SUMO1); alternate cross-link involves residue K766. K766 is covalently cross-linked (Glycyl lysine isopeptide (Lys-Gly) (interchain with G-Cter in SUMO2); alternate). Glycyl lysine isopeptide (Lys-Gly) (interchain with G-Cter in SUMO2) cross-links involve residues K825 and K850. Residues 856-885 form a disordered region; that stretch reads APAGSEKSASLTQQYPASGESKTKDESQSL. A compositionally biased stretch (polar residues) spans 862 to 871; it reads KSASLTQQYP. Glycyl lysine isopeptide (Lys-Gly) (interchain with G-Cter in SUMO2) cross-links involve residues K877 and K879. The GATA-type zinc finger occupies 896–920; that stretch reads CANCLTTKTSLWRKNANGGYVCNAC. Glycyl lysine isopeptide (Lys-Gly) (interchain with G-Cter in SUMO2) cross-links involve residues K925, K937, and K965. Over residues 961-977 the composition is skewed to polar residues; sequence EQLNKQQRGSGEEQVNG. The interval 961–1000 is disordered; the sequence is EQLNKQQRGSGEEQVNGSPLERRSEDHLSESHPREIPLPS. S978 carries the post-translational modification Phosphoserine. The segment covering 980-995 has biased composition (basic and acidic residues); the sequence is LERRSEDHLSESHPRE. The mediates interaction with RNF4 stretch occupies residues 985 to 1184; the sequence is EDHLSESHPR…PTANGASKEK (200 aa). Residues K1003, K1012, K1030, and K1040 each participate in a glycyl lysine isopeptide (Lys-Gly) (interchain with G-Cter in SUMO2) cross-link. Positions 1040–1049 are enriched in polar residues; sequence KSPQESTGDP. Residues 1040-1078 are disordered; it reads KSPQESTGDPGNSSSVSDGKGSSERGSPIEKYMRPAKHP. S1041 is modified (phosphoserine). The span at 1050-1059 shows a compositional bias: low complexity; the sequence is GNSSSVSDGK. Positions 1060–1072 are enriched in basic and acidic residues; the sequence is GSSERGSPIEKYM. S1066 carries the phosphoserine modification. K1070 participates in a covalent cross-link: Glycyl lysine isopeptide (Lys-Gly) (interchain with G-Cter in SUMO2). S1085 is subject to Phosphoserine. The transcriptional repressor domain stretch occupies residues 1163–1281; that stretch reads PLDLAIKHSR…QAEKNGKPKE (119 aa). The segment at 1169–1195 is disordered; that stretch reads KHSRPGPTANGASKEKTKAPPTVKNED. Glycyl lysine isopeptide (Lys-Gly) (interchain with G-Cter in SUMO2); alternate cross-links involve residues K1192 and K1201. Residues K1192 and K1201 each participate in a glycyl lysine isopeptide (Lys-Gly) (interchain with G-Cter in SUMO); alternate cross-link. K1201 participates in a covalent cross-link: Glycyl lysine isopeptide (Lys-Gly) (interchain with G-Cter in SUMO1); alternate. C2H2-type zinc fingers lie at residues 1215-1237 and 1243-1267; these read TKCV…MSCH and FQCS…RGLH.

Interacts with RNF4; regulates TRPS1 repressor activity. Interacts specifically with the activator form of GLI3 (GLI3A) but not with the repressor form (GLI3R). In terms of processing, sumoylated. Sumoylation in the repressor domain inhibits the transcription repression activity. Sumoylation on Lys-1201 is the major site. Appears to be sumoylated on multiple sites. In the embryo, expression is detected in both visceral and skeletal tissues. Found in the maxilla, mandible, snout, prospective phalanges and in the femoral head within the developing hip. Also expressed in the hair follicles.

Its subcellular location is the nucleus. Its function is as follows. Transcriptional repressor. Binds specifically to GATA sequences and represses expression of GATA-regulated genes at selected sites and stages in vertebrate development. Regulates chondrocyte proliferation and differentiation. Executes multiple functions in proliferating chondrocytes, expanding the region of distal chondrocytes, activating proliferation in columnar cells and supporting the differentiation of columnar into hypertrophic chondrocytes. This is Zinc finger transcription factor Trps1 (Trps1) from Mus musculus (Mouse).